The sequence spans 129 residues: Insulin-like growth factor 2 (129 aa).

The first 24 residues, 1-24 (MGVPMGKSLLAPLTFLALASCCFA), serve as a signal peptide directing secretion. Positions 25–52 (AYRPSETLCGGELVDTLQFVCGDRGFYF) are b. 3 cysteine pairs are disulfide-bonded: Cys-33–Cys-72, Cys-45–Cys-85, and Cys-71–Cys-76. The c stretch occupies residues 53–65 (SRPASRVSRRSSR). The interval 66–86 (GIVEECCFRSCDLALLETYCA) is a. The interval 87-92 (TPAKSE) is d. A propeptide spans 93–129 (RDVSTPPTVLPDNFPRYPVGKFFQYDTWKQSAQRLRR) (e peptide).

This sequence belongs to the insulin family. In terms of assembly, interacts with MYORG; this interaction is required for IGF2 secretion. Interacts with integrins ITGAV:ITGB3 and ITGA6:ITGB4; integrin-binding is required for IGF2 signaling. Post-translationally, proteolytically processed by PCSK4, proIGF2 is cleaved at Arg-129 and Arg-92 to generate big-IGF2 and mature IGF2.

The protein resides in the secreted. Its function is as follows. The insulin-like growth factors possess growth-promoting activity. Major fetal growth hormone in mammals. Plays a key role in regulating fetoplacental development. IGF2 is influenced by placental lactogen. Also involved in tissue differentiation. In adults, involved in glucose metabolism in adipose tissue, skeletal muscle and liver. Acts as a ligand for integrin which is required for IGF2 signaling. Positively regulates myogenic transcription factor MYOD1 function by facilitating the recruitment of transcriptional coactivators, thereby controlling muscle terminal differentiation. Inhibits myoblast differentiation and modulates metabolism via increasing the mitochondrial respiration rate. In terms of biological role, preptin undergoes glucose-mediated co-secretion with insulin, and acts as a physiological amplifier of glucose-mediated insulin secretion. Exhibits osteogenic properties by increasing osteoblast mitogenic activity through phosphoactivation of MAPK1 and MAPK3. This chain is Insulin-like growth factor 2, found in Neovison vison (American mink).